A 125-amino-acid polypeptide reads, in one-letter code: Insulin growth factor-like family member 3 (125 aa).

The N-terminal stretch at 1 to 24 (MRPRCCILALVCWITVFLLQCSKG) is a signal peptide.

The protein belongs to the IGFL family. As to expression, detected in the cerebellum.

It localises to the secreted. Its function is as follows. Potential ligand of the IGFLR1 cell membrane receptor. This is Insulin growth factor-like family member 3 (IGFL3) from Homo sapiens (Human).